The sequence spans 700 residues: Hedgehog-interacting protein (700 aa).

Residues 1–17 (MLKMLSFKLLLLAVALG) form the signal peptide. An N-linked (GlcNAc...) asparagine glycan is attached at N99. Cystine bridges form between C216/C536, C218/C543, C402/C624, C435/C452, C500/C594, C612/C623, C625/C634, C639/C649, C643/C655, and C657/C666. Residues 376–388 (LDDMEEMDGLSDF) form an interaction with SHH zinc binding site region. Zn(2+) is bound at residue D383. N416, N447, and N459 each carry an N-linked (GlcNAc...) asparagine glycan. 2 EGF-like domains span residues 607-634 (DCSRLCRNGYYTPTGKCCCSPGWEGDFC) and 635-667 (RIAKCEPACRHGGVCVRPNKCLCKKGYLGPQCE).

This sequence belongs to the HHIP family. In terms of assembly, interacts with all three hedgehog family members, SHH, IHH and DHH. In terms of tissue distribution, in the adult brain, high expression found in the ventral cochlear nucleus, medial habenula, indusium griseum and tenia tecta. Some expression also in the caudate putamen, the nucleus accumbens, the ventral pallidum and in the superficial layers of the superior colliculus.

It is found in the cell membrane. The protein localises to the secreted. In terms of biological role, modulates hedgehog signaling in several cell types, including brain and lung through direct interaction with members of the hedgehog family. Soluble forms inhibit Shh-induced differentiation in the fibroblast cell line C3H/10T1/2. The chain is Hedgehog-interacting protein (Hhip) from Mus musculus (Mouse).